A 248-amino-acid chain; its full sequence is Adenosylcobinamide-GDP ribazoletransferase (248 aa).

The next 7 membrane-spanning stretches (helical) occupy residues 24–44, 70–90, 106–126, 134–154, 157–177, 188–210, and 228–248; these read EINL…IGAW, IIIT…GLFS, VGAN…SLFL, IGWL…LLFA, TYAG…WWPV, LGLF…TIIY, and AGGQ…WGLI.

Belongs to the CobS family. Mg(2+) is required as a cofactor.

The protein resides in the cell membrane. The enzyme catalyses alpha-ribazole + adenosylcob(III)inamide-GDP = adenosylcob(III)alamin + GMP + H(+). It catalyses the reaction alpha-ribazole 5'-phosphate + adenosylcob(III)inamide-GDP = adenosylcob(III)alamin 5'-phosphate + GMP + H(+). It participates in cofactor biosynthesis; adenosylcobalamin biosynthesis; adenosylcobalamin from cob(II)yrinate a,c-diamide: step 7/7. Its function is as follows. Joins adenosylcobinamide-GDP and alpha-ribazole to generate adenosylcobalamin (Ado-cobalamin). Also synthesizes adenosylcobalamin 5'-phosphate from adenosylcobinamide-GDP and alpha-ribazole 5'-phosphate. The polypeptide is Adenosylcobinamide-GDP ribazoletransferase (Listeria monocytogenes serotype 4b (strain CLIP80459)).